The primary structure comprises 452 residues: Scaffold protein ILK (452 aa).

5 ANK repeats span residues 2–30 (DDIFTQCREGNAVAVRLWLDNTENDLNQG), 31–63 (DDHGFSPLHWACREGRSNVVDMLIMRGARINVM), 64–96 (NRGDDTPLHLAASHGHRDIVQKLIQFKADINAV), 97–129 (NEHGNTPLHYACFWGHDTVAEDLVGNGALVSIA), and 130–174 (NKYS…GTTR). Residues 193 to 446 (LSLSQKLNEN…PKFDMIVPIL (254 aa)) form the Protein kinase domain. Residues asparagine 200, asparagine 202, serine 204, histidine 270, methionine 272, and asparagine 279 each coordinate ATP. Residue aspartate 339 coordinates Mg(2+). Lysine 341 is an ATP binding site. The Nuclear localization signal signature appears at 363–371 (KKPEEINRR).

It belongs to the protein kinase superfamily. TKL Ser/Thr protein kinase family. In terms of assembly, interacts with PXN/PAXILLIN (via LD motif 4).

Its subcellular location is the cell junction. It is found in the focal adhesion. It localises to the cell membrane. The protein resides in the cell projection. The protein localises to the lamellipodium. Its subcellular location is the cytoplasm. It is found in the myofibril. It localises to the sarcomere. The protein resides in the nucleus. The protein localises to the cytoskeleton. Its subcellular location is the microtubule organizing center. It is found in the centrosome. It localises to the cell cortex. In terms of biological role, scaffold protein which mediates protein-protein interactions during a range of cellular events including focal adhesion assembly, cell adhesion and cell migration. The sequence is that of Scaffold protein ILK from Gallus gallus (Chicken).